The chain runs to 288 residues: Glycine--tRNA ligase alpha subunit (288 aa).

Belongs to the class-II aminoacyl-tRNA synthetase family. As to quaternary structure, tetramer of two alpha and two beta subunits.

The protein resides in the cytoplasm. The catalysed reaction is tRNA(Gly) + glycine + ATP = glycyl-tRNA(Gly) + AMP + diphosphate. In Desulfatibacillum aliphaticivorans, this protein is Glycine--tRNA ligase alpha subunit.